The primary structure comprises 205 residues: Protein GrpE (205 aa).

A disordered region spans residues 172–205 (KGSTGPGAPAEPAAAPNPYASNGADTGGSFDTKA). The span at 177 to 195 (PGAPAEPAAAPNPYASNGA) shows a compositional bias: low complexity.

The protein belongs to the GrpE family. As to quaternary structure, homodimer.

The protein resides in the cytoplasm. Its function is as follows. Participates actively in the response to hyperosmotic and heat shock by preventing the aggregation of stress-denatured proteins, in association with DnaK and GrpE. It is the nucleotide exchange factor for DnaK and may function as a thermosensor. Unfolded proteins bind initially to DnaJ; upon interaction with the DnaJ-bound protein, DnaK hydrolyzes its bound ATP, resulting in the formation of a stable complex. GrpE releases ADP from DnaK; ATP binding to DnaK triggers the release of the substrate protein, thus completing the reaction cycle. Several rounds of ATP-dependent interactions between DnaJ, DnaK and GrpE are required for fully efficient folding. The sequence is that of Protein GrpE from Caulobacter sp. (strain K31).